The primary structure comprises 266 residues: tRNA pseudouridine synthase A (266 aa).

Residue Asp-57 is the Nucleophile of the active site. Substrate is bound at residue Tyr-115.

This sequence belongs to the tRNA pseudouridine synthase TruA family. In terms of assembly, homodimer.

It carries out the reaction uridine(38/39/40) in tRNA = pseudouridine(38/39/40) in tRNA. Formation of pseudouridine at positions 38, 39 and 40 in the anticodon stem and loop of transfer RNAs. This Buchnera aphidicola subsp. Acyrthosiphon pisum (strain APS) (Acyrthosiphon pisum symbiotic bacterium) protein is tRNA pseudouridine synthase A.